We begin with the raw amino-acid sequence, 251 residues long: Adapter protein MecA (251 aa).

Belongs to the MecA family. In terms of assembly, homodimer.

In terms of biological role, enables the recognition and targeting of unfolded and aggregated proteins to the ClpC protease or to other proteins involved in proteolysis. The chain is Adapter protein MecA from Streptococcus agalactiae serotype Ia (strain ATCC 27591 / A909 / CDC SS700).